A 371-amino-acid polypeptide reads, in one-letter code: MNDKTIPVTQPSLPELAEFMPYLEKIWKNKWLTNNGPFHQELEEKLCEFLGVQHISLFNNATIALITALQALRITGEVITTPYSFVATSHAILWNGLTPVFVDIENDGYNIDYRKIEQAITPKTSAILPVHCYSTPCEVEEIQKIADNYGLKVIYDAAHAFGVNFKGGKVYLTMVIYQFLVSMRRKSSINFEGGAIISPDAKTKLRIDRLKNFGIADELTVTAPGINGKMSEINAAFGLVQLKHIEGSISKRKIIDSLYRNLLKGTPGITIFPGNINTNSNYSYFPILIDDGFHMSRDQAYELLKKNNILSRKYFYPLISNMPMYRGLISASVDNLPIANSVADKVLCLPIYTDLNEEIVVKITKLLLGKM.

At Lys186 the chain carries N6-(pyridoxal phosphate)lysine.

It belongs to the DegT/DnrJ/EryC1 family. Pyridoxal 5'-phosphate is required as a cofactor.

It catalyses the reaction dTDP-4-amino-4,6-dideoxy-D-glucose + 2-oxoglutarate = dTDP-4-dehydro-6-deoxy-alpha-D-glucose + L-glutamate. The protein operates within bacterial outer membrane biogenesis; lipopolysaccharide biosynthesis. Its function is as follows. Catalyzes the conversion of dTDP-4-dehydro-6-deoxy-D-glucose (dTDP-D-Glc4O) to dTDP-4-amino-4,6-dideoxy-D-glucose (dTDP-D-Qui4N). The chain is dTDP-4-amino-4,6-dideoxy-D-glucose transaminase (vioA) from Escherichia coli.